Here is a 309-residue protein sequence, read N- to C-terminus: Pantothenate kinase (309 aa).

92-99 (GSVAVGKT) serves as a coordination point for ATP.

The protein belongs to the prokaryotic pantothenate kinase family.

The protein localises to the cytoplasm. It carries out the reaction (R)-pantothenate + ATP = (R)-4'-phosphopantothenate + ADP + H(+). The protein operates within cofactor biosynthesis; coenzyme A biosynthesis; CoA from (R)-pantothenate: step 1/5. The protein is Pantothenate kinase (coaA) of Lactiplantibacillus plantarum (strain ATCC BAA-793 / NCIMB 8826 / WCFS1) (Lactobacillus plantarum).